Consider the following 39-residue polypeptide: Phosphate starvation-inducible protein 1 (39 aa).

The protein localises to the cell outer membrane. This is Phosphate starvation-inducible protein 1 from Pseudomonas fluorescens.